A 407-amino-acid chain; its full sequence is Protein ORF45 (407 aa).

Over residues 1 to 10 the composition is skewed to polar residues; it reads MAMFVRTSSS. 3 disordered regions span residues 1 to 183, 196 to 318, and 332 to 407; these read MAMF…SDDE, GTGA…QRQP, and SSGS…PWLD. Phosphoserine; by host TBK1 and IKKE is present on S41. A compositionally biased stretch (acidic residues) spans 91-115; it reads SEYDEDEEDEDEEENDDVQEEDEPE. Basic residues predominate over residues 128 to 139; it reads LRPRPLARRAHT. A Phosphoserine; by host TBK1 and IKKE modification is found at S162. Positions 205–218 are enriched in polar residues; that stretch reads ASRNSVPGTQSSPY. The Nuclear export signal signature appears at 284-294; sequence VLSQRIGLMDV. Positions 297–300 match the Nuclear localization signal motif; it reads KRKR. Composition is skewed to low complexity over residues 342–353 and 360–383; these read SSAVSVIVSPSS and TQSPSTSAHSISSGSTTTAGSRCS.

In terms of assembly, interacts with host IRF7. Interacts with host RPS6KA1. Interacts with host RAB11FIP5; this interaction results in the lysosomal degradation of ORF45 and the inhibition of viral particle release. Interacts with host p53/TP53; this interaction down-regulates p53/TP53 signaling pathway. Interacts with the N-terminal part of host NLRP1; relieving autoinhibition of the NLRP1 inflammasome. Phosphorylated on Ser-41 and Ser-162 by host IKBKE and TBK1.

It is found in the virion tegument. It localises to the host cytoplasm. The protein resides in the host nucleus. Its subcellular location is the host Golgi apparatus. Prevents the establishment of cellular antiviral state by blocking virus-induced phosphorylation and activation of host interferon regulatory factor 7/IRF7, a transcription factor critical for the induction of interferons alpha and beta. Mechanistically, ORF45 competes with the associated IRF7 and inhibits its phosphorylation by IKBKE or TBK1 by acting as an alternative substrate. Acts as an activator of the NLRP1 inflammasome via interaction with the N-terminal part of host NLRP1: interaction promotes translocation of the N-terminal part of NLRP1 into the nucleus, relieving autoinhibition of the NLRP1 inflammasome and leading to its activation. Also plays a role in promoting the late transcription and translation of viral lytic genes by constitutively activating host extracellular signal-regulated kinase (ERK)-p90 ribosomal S6 kinase/RPS6KA1. In addition, supports the viral replication cycle by modulating host p53/TP53 signaling pathway. Interacts with host p53/TP53 and prevents its interaction with the deubiquitinase USP7, leading to sequestration of P53/TP53 in the host cytoplasm thereby diminishing its transcriptional activity. In Homo sapiens (Human), this protein is Protein ORF45 (ORF45).